Reading from the N-terminus, the 226-residue chain is Lipoprotein-releasing system ATP-binding protein LolD (226 aa).

The region spanning 6–226 is the ABC transporter domain; sequence LKLDNIRRAF…KMSEGLLVEV (221 aa). 42 to 49 serves as a coordination point for ATP; that stretch reads GPSGAGKS.

Belongs to the ABC transporter superfamily. Lipoprotein translocase (TC 3.A.1.125) family. As to quaternary structure, the complex is composed of two ATP-binding proteins (LolD) and two transmembrane proteins (LolC and LolE).

It localises to the cell inner membrane. Functionally, part of the ABC transporter complex LolCDE involved in the translocation of mature outer membrane-directed lipoproteins, from the inner membrane to the periplasmic chaperone, LolA. Responsible for the formation of the LolA-lipoprotein complex in an ATP-dependent manner. The chain is Lipoprotein-releasing system ATP-binding protein LolD from Paramagnetospirillum magneticum (strain ATCC 700264 / AMB-1) (Magnetospirillum magneticum).